A 644-amino-acid polypeptide reads, in one-letter code: G-protein coupled receptor-associated protein LMBRD2 (644 aa).

Over Met1 to Val4 the chain is Extracellular. The helical transmembrane segment at Ser5–Ile27 threads the bilayer. The Cytoplasmic portion of the chain corresponds to Arg28–Asn31. The chain crosses the membrane as a helical span at residues Pro32–Leu52. Residues Pro53–Arg102 are Extracellular-facing. Asn73 carries an N-linked (GlcNAc...) asparagine glycan. The helical transmembrane segment at Val103–Val123 threads the bilayer. Topologically, residues Thr124–Tyr145 are cytoplasmic. The chain crosses the membrane as a helical span at residues Ala146–Ile166. At Asn167 to Lys172 the chain is on the extracellular side. The chain crosses the membrane as a helical span at residues Val173–His193. The Cytoplasmic portion of the chain corresponds to Gly194–Leu369. Positions Tyr216 to Asn245 form a coiled coil. The chain crosses the membrane as a helical span at residues Gly370–Val390. Residues Ser391–Tyr412 are Extracellular-facing. The helical transmembrane segment at Thr413 to Phe433 threads the bilayer. Residues Arg434–Ser453 lie on the Cytoplasmic side of the membrane. The helical transmembrane segment at Ile454 to Gly474 threads the bilayer. The Extracellular segment spans residues Met475 to Asp502. The helical transmembrane segment at Val503–Cys523 threads the bilayer. The Cytoplasmic segment spans residues Ala524 to Met644. Residues Ser567–Gln576 show a composition bias toward basic and acidic residues. A disordered region spans residues Ser567–Met644. The span at Asn578–Asn594 shows a compositional bias: low complexity. Residues Val621 to Met644 show a composition bias toward polar residues.

It belongs to the LIMR family.

It localises to the cell membrane. May associate with G-protein coupled receptors and regulate downstream signaling pathways. The polypeptide is G-protein coupled receptor-associated protein LMBRD2 (Caenorhabditis briggsae).